The primary structure comprises 258 residues: Imidazole glycerol phosphate synthase subunit HisF (258 aa).

Active-site residues include Asp11 and Asp130.

It belongs to the HisA/HisF family. Heterodimer of HisH and HisF.

It localises to the cytoplasm. It carries out the reaction 5-[(5-phospho-1-deoxy-D-ribulos-1-ylimino)methylamino]-1-(5-phospho-beta-D-ribosyl)imidazole-4-carboxamide + L-glutamine = D-erythro-1-(imidazol-4-yl)glycerol 3-phosphate + 5-amino-1-(5-phospho-beta-D-ribosyl)imidazole-4-carboxamide + L-glutamate + H(+). Its pathway is amino-acid biosynthesis; L-histidine biosynthesis; L-histidine from 5-phospho-alpha-D-ribose 1-diphosphate: step 5/9. Functionally, IGPS catalyzes the conversion of PRFAR and glutamine to IGP, AICAR and glutamate. The HisF subunit catalyzes the cyclization activity that produces IGP and AICAR from PRFAR using the ammonia provided by the HisH subunit. The sequence is that of Imidazole glycerol phosphate synthase subunit HisF from Baumannia cicadellinicola subsp. Homalodisca coagulata.